A 279-amino-acid polypeptide reads, in one-letter code: DegV domain-containing protein SACOL1460 (279 aa).

Positions 4–278 (QIIVTDSTSD…QGAIGLVVLK (275 aa)) constitute a DegV domain. Positions 61 and 93 each coordinate hexadecanoate.

In terms of biological role, may bind long-chain fatty acids, such as palmitate, and may play a role in lipid transport or fatty acid metabolism. This Staphylococcus aureus (strain COL) protein is DegV domain-containing protein SACOL1460.